The following is a 213-amino-acid chain: Inactive ribonuclease-like protein 10 (213 aa).

An N-terminal signal peptide occupies residues 1 to 24 (MKLTLVQIFFMMLLLLLGLGMGLG). Residue N131 is glycosylated (N-linked (GlcNAc...) asparagine).

It belongs to the pancreatic ribonuclease family. In terms of processing, the N-terminus is blocked. Glycosylated. Male-specific expression in proximal caput of the epididymis.

It is found in the secreted. In terms of biological role, secreted proximal epididymal protein required for post-testicular sperm maturation and male fertility. May be involved in sperm adhesion to the egg zona pellucida. Does not have ribonuclease activity. This is Inactive ribonuclease-like protein 10 (RNASE10) from Equus caballus (Horse).